We begin with the raw amino-acid sequence, 230 residues long: 5'-methylthioadenosine/S-adenosylhomocysteine nucleosidase (230 aa).

Residue glutamate 12 is the Proton acceptor of the active site. Substrate is bound by residues glycine 78, valine 152, and 173–174; that span reads ME. The Proton donor role is filled by aspartate 197.

Belongs to the PNP/UDP phosphorylase family. MtnN subfamily.

It catalyses the reaction S-adenosyl-L-homocysteine + H2O = S-(5-deoxy-D-ribos-5-yl)-L-homocysteine + adenine. The catalysed reaction is S-methyl-5'-thioadenosine + H2O = 5-(methylsulfanyl)-D-ribose + adenine. The enzyme catalyses 5'-deoxyadenosine + H2O = 5-deoxy-D-ribose + adenine. It functions in the pathway amino-acid biosynthesis; L-methionine biosynthesis via salvage pathway; S-methyl-5-thio-alpha-D-ribose 1-phosphate from S-methyl-5'-thioadenosine (hydrolase route): step 1/2. In terms of biological role, catalyzes the irreversible cleavage of the glycosidic bond in both 5'-methylthioadenosine (MTA) and S-adenosylhomocysteine (SAH/AdoHcy) to adenine and the corresponding thioribose, 5'-methylthioribose and S-ribosylhomocysteine, respectively. Also cleaves 5'-deoxyadenosine, a toxic by-product of radical S-adenosylmethionine (SAM) enzymes, into 5-deoxyribose and adenine. This Glaesserella parasuis serovar 5 (strain SH0165) (Haemophilus parasuis) protein is 5'-methylthioadenosine/S-adenosylhomocysteine nucleosidase.